The primary structure comprises 139 residues: MKVLRLGFTDKYIEKQEPIDVVFDKYQPLGYVAVVELPSRIPWIIEIQRREWIERFITMPRDIFRELSFDIIILRRKLEPTPQYRMIRDIVSDLRQSRGYASGMVILPNGLTYDGDLLEGIEVMEGVDVIAYTLGLIDF.

It localises to the virion. The polypeptide is Coat protein TP2 (Thermoproteus tenax virus 1 (strain KRA1) (TTV1)).